We begin with the raw amino-acid sequence, 809 residues long: Phenylalanine--tRNA ligase beta subunit (809 aa).

The tRNA-binding domain occupies K39–S152. Residues K404 to C492 form the B5 domain. Mg(2+) is bound by residues D470, D476, E479, and E480. An FDX-ACB domain is found at N717–R808.

It belongs to the phenylalanyl-tRNA synthetase beta subunit family. Type 1 subfamily. As to quaternary structure, tetramer of two alpha and two beta subunits. It depends on Mg(2+) as a cofactor.

It localises to the cytoplasm. The catalysed reaction is tRNA(Phe) + L-phenylalanine + ATP = L-phenylalanyl-tRNA(Phe) + AMP + diphosphate + H(+). The polypeptide is Phenylalanine--tRNA ligase beta subunit (Dehalococcoides mccartyi (strain CBDB1)).